Reading from the N-terminus, the 237-residue chain is Orotidine 5'-phosphate decarboxylase (237 aa).

Substrate-binding positions include aspartate 10, lysine 33, aspartate 60 to threonine 69, threonine 123, arginine 185, glutamine 194, glycine 214, and arginine 215. Residue lysine 62 is the Proton donor of the active site.

It belongs to the OMP decarboxylase family. Type 1 subfamily. In terms of assembly, homodimer.

The catalysed reaction is orotidine 5'-phosphate + H(+) = UMP + CO2. It participates in pyrimidine metabolism; UMP biosynthesis via de novo pathway; UMP from orotate: step 2/2. Catalyzes the decarboxylation of orotidine 5'-monophosphate (OMP) to uridine 5'-monophosphate (UMP). This Enterococcus faecalis (strain ATCC 700802 / V583) protein is Orotidine 5'-phosphate decarboxylase.